The chain runs to 319 residues: Red chlorophyll catabolite reductase, chloroplastic (319 aa).

A chloroplast-targeting transit peptide spans 1 to 39 (MAMIFCNTLYSSSSPSYLSPLTSKPSRFSKNLRPRAQFQ). Residues Glu154 and 207 to 209 (YVS) contribute to the red chlorophyll catabolite site. Residues 255–286 (LERCVKEEEEKIVVGEEERMELERRDKSFRRK) adopt a coiled-coil conformation. A red chlorophyll catabolite-binding site is contributed by Asp291.

Homodimer. Interacts with HCAR. Interacts with SGR1, NYC1, NOL, PPH, PAO and the LHCII complex. Part of a SGR1-CCE-LHCII complex, which acts in chlorophyll breakdown. As to expression, expressed in all tissues tested, including roots.

It localises to the plastid. Its subcellular location is the chloroplast stroma. It is found in the chloroplast thylakoid membrane. It catalyses the reaction primary fluorescent chlorophyll catabolite + 2 oxidized [2Fe-2S]-[ferredoxin] = red chlorophyll catabolite + 2 reduced [2Fe-2S]-[ferredoxin] + 3 H(+). Its pathway is porphyrin-containing compound metabolism; chlorophyll degradation. Catalyzes the key reaction of chlorophyll catabolism, porphyrin macrocycle cleavage of pheophorbide a (pheide a) to a primary fluorescent catabolite (pFCC). Works in a two-step reaction with pheophorbide a oxygenase (PaO) by reducing the C20/C1 double bond of the intermediate, RCC. Belongs to the chlorophyll catabolic enzymes (CCEs). The chain is Red chlorophyll catabolite reductase, chloroplastic from Arabidopsis thaliana (Mouse-ear cress).